The primary structure comprises 440 residues: Oligodendrocyte-myelin glycoprotein (440 aa).

Positions 1-24 are cleaved as a signal peptide; that stretch reads MEYQILKMSLCLFILLFLTPGILC. Residues 25-55 form the LRRNT domain; that stretch reads ICPLQCICTERHRHVDCSGRNLSTLPSGLQE. 2 N-linked (GlcNAc...) asparagine glycosylation sites follow: asparagine 45 and asparagine 61. LRR repeat units follow at residues 56-77, 79-100, 101-121, 124-145, 147-168, 169-189, 192-213, and 216-239; these read NIIHLNLSYNHFTDLHNQLTQY, NLRTLDISNNRLESLPAHLPRS, LWNMSAANNNIKLLDKSDTAY, NLKYLDVSKNMLEKVVLIKNTL, SLEVLNLSSNKLWTVPTNMPSK, LHIVDLSNNSLTQILPGTLIN, NLTHLYLHNNKFTFIPDQSFDQ, and QLQEITLYNNRWSCDHKQNITYLL. A glycan (N-linked (GlcNAc...) asparagine) is linked at asparagine 103. N-linked (GlcNAc...) asparagine glycans are attached at residues asparagine 152, asparagine 176, asparagine 189, asparagine 192, and asparagine 234. Ser/Thr-rich repeat units follow at residues 229-270, 271-292, 293-335, 336-377, and 378-416; these read CDHK…YPTP, SGFTSSLFTVSGMQTVDTINSL, SVVT…VPYP, EDTS…SPTP, and MTLSITSGMPNNFSEMPQQSTTLNLWREETTTNVKTPLP. N-linked (GlcNAc...) asparagine glycans are attached at residues asparagine 364 and asparagine 389. Residue serine 417 is the site of GPI-anchor amidated serine attachment. Residues 418 to 440 constitute a propeptide, removed in mature form; it reads VANAWKVNASFLLLLNVVVMLAV. A glycan (N-linked (GlcNAc...) asparagine) is linked at asparagine 425.

Binds to RTN4R. O-glycosylated in its Ser/Thr-rich repeat domain. Oligodendrocytes and myelin of the central nervous system.

It localises to the cell membrane. Its function is as follows. Cell adhesion molecule contributing to the interactive process required for myelination in the central nervous system. The sequence is that of Oligodendrocyte-myelin glycoprotein (OMG) from Homo sapiens (Human).